Consider the following 377-residue polypeptide: 3-dehydroquinate synthase (377 aa).

Residues 115-119 (GVIGD), 139-140 (TS), K152, and K161 contribute to the NAD(+) site. Zn(2+) contacts are provided by E194, H256, and H275.

This sequence belongs to the sugar phosphate cyclases superfamily. Dehydroquinate synthase family. It depends on Co(2+) as a cofactor. Zn(2+) is required as a cofactor. Requires NAD(+) as cofactor.

The protein localises to the cytoplasm. The catalysed reaction is 7-phospho-2-dehydro-3-deoxy-D-arabino-heptonate = 3-dehydroquinate + phosphate. Its pathway is metabolic intermediate biosynthesis; chorismate biosynthesis; chorismate from D-erythrose 4-phosphate and phosphoenolpyruvate: step 2/7. Catalyzes the conversion of 3-deoxy-D-arabino-heptulosonate 7-phosphate (DAHP) to dehydroquinate (DHQ). This chain is 3-dehydroquinate synthase, found in Rhizobium rhizogenes (strain K84 / ATCC BAA-868) (Agrobacterium radiobacter).